The chain runs to 599 residues: Elongation factor 4 (599 aa).

In terms of domain architecture, tr-type G spans 2–184 (KHIRNFSIIA…RLVRDIPPPE (183 aa)). Residues 14–19 (DHGKST) and 131–134 (NKID) contribute to the GTP site.

It belongs to the TRAFAC class translation factor GTPase superfamily. Classic translation factor GTPase family. LepA subfamily.

Its subcellular location is the cell inner membrane. The catalysed reaction is GTP + H2O = GDP + phosphate + H(+). Its function is as follows. Required for accurate and efficient protein synthesis under certain stress conditions. May act as a fidelity factor of the translation reaction, by catalyzing a one-codon backward translocation of tRNAs on improperly translocated ribosomes. Back-translocation proceeds from a post-translocation (POST) complex to a pre-translocation (PRE) complex, thus giving elongation factor G a second chance to translocate the tRNAs correctly. Binds to ribosomes in a GTP-dependent manner. The polypeptide is Elongation factor 4 (Erwinia tasmaniensis (strain DSM 17950 / CFBP 7177 / CIP 109463 / NCPPB 4357 / Et1/99)).